A 297-amino-acid polypeptide reads, in one-letter code: UDP-3-O-acyl-N-acetylglucosamine deacetylase (297 aa).

Residues His-77, His-236, and Asp-240 each coordinate Zn(2+). His-263 (proton donor) is an active-site residue.

Belongs to the LpxC family. Zn(2+) serves as cofactor.

The catalysed reaction is a UDP-3-O-[(3R)-3-hydroxyacyl]-N-acetyl-alpha-D-glucosamine + H2O = a UDP-3-O-[(3R)-3-hydroxyacyl]-alpha-D-glucosamine + acetate. It participates in glycolipid biosynthesis; lipid IV(A) biosynthesis; lipid IV(A) from (3R)-3-hydroxytetradecanoyl-[acyl-carrier-protein] and UDP-N-acetyl-alpha-D-glucosamine: step 2/6. Its function is as follows. Catalyzes the hydrolysis of UDP-3-O-myristoyl-N-acetylglucosamine to form UDP-3-O-myristoylglucosamine and acetate, the committed step in lipid A biosynthesis. In Psychrobacter sp. (strain PRwf-1), this protein is UDP-3-O-acyl-N-acetylglucosamine deacetylase.